The chain runs to 618 residues: Proline--tRNA ligase (618 aa).

Belongs to the class-II aminoacyl-tRNA synthetase family. ProS type 1 subfamily. Homodimer.

The protein resides in the cytoplasm. It carries out the reaction tRNA(Pro) + L-proline + ATP = L-prolyl-tRNA(Pro) + AMP + diphosphate. Its function is as follows. Catalyzes the attachment of proline to tRNA(Pro) in a two-step reaction: proline is first activated by ATP to form Pro-AMP and then transferred to the acceptor end of tRNA(Pro). As ProRS can inadvertently accommodate and process non-cognate amino acids such as alanine and cysteine, to avoid such errors it has two additional distinct editing activities against alanine. One activity is designated as 'pretransfer' editing and involves the tRNA(Pro)-independent hydrolysis of activated Ala-AMP. The other activity is designated 'posttransfer' editing and involves deacylation of mischarged Ala-tRNA(Pro). The misacylated Cys-tRNA(Pro) is not edited by ProRS. This is Proline--tRNA ligase from Streptococcus uberis (strain ATCC BAA-854 / 0140J).